The sequence spans 95 residues: Virion membrane protein OPG135 (95 aa).

The first 22 residues, 1–22, serve as a signal peptide directing secretion; that stretch reads MSCYTAILKSVGGLALFQDANG. Topologically, residues 23-45 are intravirion; it reads AIDLCRHFFMYFCEQKLRPNSFW. Residues 46 to 66 traverse the membrane as a helical segment; the sequence is FVVVRAIASMIMYLVLGIALL. The Virion surface segment spans residues 67–83; the sequence is YISEQDDKKNTNNASNS. The interval 76–95 is disordered; sequence NTNNASNSNKLNESSINSNS. The span at 77–95 shows a compositional bias: low complexity; sequence TNNASNSNKLNESSINSNS. 2 N-linked (GlcNAc...) asparagine; by host glycosylation sites follow: Asn79 and Asn87.

The protein belongs to the oerthopoxvirus OPG135 family.

The protein resides in the virion membrane. The protein localises to the host cytoplasm. Its function is as follows. Envelope protein. Required for an early step in virion morphogenesis. The chain is Virion membrane protein OPG135 (OPG135) from Homo sapiens (Human).